The following is a 261-amino-acid chain: tRNA U34 carboxymethyltransferase (261 aa).

Carboxy-S-adenosyl-L-methionine-binding positions include lysine 25, tryptophan 39, lysine 44, glycine 63, 114 to 115, tyrosine 135, and arginine 250; that span reads VE.

This sequence belongs to the class I-like SAM-binding methyltransferase superfamily. CmoB family. In terms of assembly, homotetramer.

It catalyses the reaction carboxy-S-adenosyl-L-methionine + 5-hydroxyuridine(34) in tRNA = 5-carboxymethoxyuridine(34) in tRNA + S-adenosyl-L-homocysteine + H(+). In terms of biological role, catalyzes carboxymethyl transfer from carboxy-S-adenosyl-L-methionine (Cx-SAM) to 5-hydroxyuridine (ho5U) to form 5-carboxymethoxyuridine (cmo5U) at position 34 in tRNAs. The chain is tRNA U34 carboxymethyltransferase from Helicobacter pylori (strain G27).